A 103-amino-acid polypeptide reads, in one-letter code: Phosphoribosyl-ATP pyrophosphatase (103 aa).

Belongs to the PRA-PH family.

The protein localises to the cytoplasm. The enzyme catalyses 1-(5-phospho-beta-D-ribosyl)-ATP + H2O = 1-(5-phospho-beta-D-ribosyl)-5'-AMP + diphosphate + H(+). It participates in amino-acid biosynthesis; L-histidine biosynthesis; L-histidine from 5-phospho-alpha-D-ribose 1-diphosphate: step 2/9. The polypeptide is Phosphoribosyl-ATP pyrophosphatase (Cereibacter sphaeroides (strain KD131 / KCTC 12085) (Rhodobacter sphaeroides)).